Here is a 793-residue protein sequence, read N- to C-terminus: Phenylalanine--tRNA ligase beta subunit (793 aa).

One can recognise a tRNA-binding domain in the interval 39-148 (AGQFTHVIVA…DEAPIGMDLR (110 aa)). Residues 401-477 (PGTVSFLFDT…RLYGYDKLQA (77 aa)) enclose the B5 domain. D455, D461, E464, and E465 together coordinate Mg(2+). Residues 698–792 (SKYPQIRRDL…LENEFSILLR (95 aa)) enclose the FDX-ACB domain.

It belongs to the phenylalanyl-tRNA synthetase beta subunit family. Type 1 subfamily. In terms of assembly, tetramer of two alpha and two beta subunits. Mg(2+) serves as cofactor.

The protein resides in the cytoplasm. The enzyme catalyses tRNA(Phe) + L-phenylalanine + ATP = L-phenylalanyl-tRNA(Phe) + AMP + diphosphate + H(+). This chain is Phenylalanine--tRNA ligase beta subunit, found in Legionella pneumophila (strain Paris).